A 590-amino-acid chain; its full sequence is Arginine--tRNA ligase (590 aa).

A 'HIGH' region motif is present at residues 138–148 (ANPTGPLHIGH).

It belongs to the class-I aminoacyl-tRNA synthetase family. In terms of assembly, monomer.

The protein resides in the cytoplasm. The catalysed reaction is tRNA(Arg) + L-arginine + ATP = L-arginyl-tRNA(Arg) + AMP + diphosphate. The polypeptide is Arginine--tRNA ligase (Orientia tsutsugamushi (strain Ikeda) (Rickettsia tsutsugamushi)).